We begin with the raw amino-acid sequence, 331 residues long: Histone-lysine N-methyltransferase, H3 lysine-9 specific dim-5 (331 aa).

The region spanning 77–159 (VGCSCASDEE…DCPNRVVERG (83 aa)) is the Pre-SET domain. Positions 79, 81, 87, 92, 94, 141, 145, 147, and 151 each coordinate Zn(2+). The 136-residue stretch at 162–297 (VPLQIFRTKD…KGTELTFDYV (136 aa)) folds into the SET domain. S-adenosyl-L-methionine is bound by residues 172–174 (RGW), Asp-215, Tyr-217, Arg-251, and 254–255 (NH). Zn(2+) contacts are provided by Cys-257, Cys-319, Cys-321, and Cys-326. The 17-residue stretch at 315-331 (EMTKCLCGTAKCRGYLW) folds into the Post-SET domain.

It belongs to the class V-like SAM-binding methyltransferase superfamily. Histone-lysine methyltransferase family. Suvar3-9 subfamily.

It is found in the nucleus. The protein resides in the chromosome. It carries out the reaction L-lysyl(9)-[histone H3] + 3 S-adenosyl-L-methionine = N(6),N(6),N(6)-trimethyl-L-lysyl(9)-[histone H3] + 3 S-adenosyl-L-homocysteine + 3 H(+). In terms of biological role, histone methyltransferase that specifically trimethylates histone H3 to form H3K9me3. H3K9me3 marks chromatin regions for DNA methylation. Dim-5 recognizes Arg-8 to Gly-12 of the H3 tail with Thr-11 and Gly-12 being the most important specificity determinants, the recognition of whcih is important to distinguish H3K9 from H3K27 and H4K20. This Neurospora crassa (strain ATCC 24698 / 74-OR23-1A / CBS 708.71 / DSM 1257 / FGSC 987) protein is Histone-lysine N-methyltransferase, H3 lysine-9 specific dim-5 (dim-5).